The following is a 343-amino-acid chain: MADKKKLLRSLAGEAMDVPPVWLMRQAGRYLPEYRATRAQAGDFLSLCYNPELAAEVTLQPIRRFDFDASILFADILLIPQALGANLWFVTGEGPRLSTITDASGMARMKTADDIHETLNPIYETVKILAQELPKETTLIGFAGAPWTVATYMIAGRGTPDQAPAHKLREGDPETFDKLMDLITAATIEYLDMQVQAGAEVVKLFDSWAGSLKGEAFDKYALAPAKRIISELKSRHPDLPIIAFPREAGEKYIGFANAVGADCLAIDTSVDAIWAAENLQTDGCVQGNLDPKLMVTGGEALASEARRIRDALKGGPHIFNLGHGITPDADPENVHILLDAIRS.

Substrate is bound by residues 25–29 (RQAGR), D75, Y152, S207, and H323.

Belongs to the uroporphyrinogen decarboxylase family. As to quaternary structure, homodimer.

It localises to the cytoplasm. The enzyme catalyses uroporphyrinogen III + 4 H(+) = coproporphyrinogen III + 4 CO2. It functions in the pathway porphyrin-containing compound metabolism; protoporphyrin-IX biosynthesis; coproporphyrinogen-III from 5-aminolevulinate: step 4/4. In terms of biological role, catalyzes the decarboxylation of four acetate groups of uroporphyrinogen-III to yield coproporphyrinogen-III. This chain is Uroporphyrinogen decarboxylase, found in Jannaschia sp. (strain CCS1).